A 291-amino-acid polypeptide reads, in one-letter code: uncharacterized protein (291 aa).

Transmembrane regions (helical) follow at residues isoleucine 5–threonine 23, isoleucine 33–phenylalanine 52, proline 69–tryptophan 91, valine 101–phenylalanine 120, valine 127–leucine 144, glycine 148–alanine 165, isoleucine 172–tryptophan 194, leucine 209–valine 228, isoleucine 235–glycine 257, and serine 262–valine 284.

The protein belongs to the EamA transporter family.

It localises to the cell membrane. This is an uncharacterized protein from Pasteurella multocida (strain Pm70).